Consider the following 176-residue polypeptide: ATP-dependent protease subunit HslV (176 aa).

Thr2 is a catalytic residue. The Na(+) site is built by Gly157, Cys160, and Thr163.

This sequence belongs to the peptidase T1B family. HslV subfamily. In terms of assembly, a double ring-shaped homohexamer of HslV is capped on each side by a ring-shaped HslU homohexamer. The assembly of the HslU/HslV complex is dependent on binding of ATP.

The protein resides in the cytoplasm. It catalyses the reaction ATP-dependent cleavage of peptide bonds with broad specificity.. With respect to regulation, allosterically activated by HslU binding. Its function is as follows. Protease subunit of a proteasome-like degradation complex believed to be a general protein degrading machinery. The protein is ATP-dependent protease subunit HslV of Pseudomonas syringae pv. tomato (strain ATCC BAA-871 / DC3000).